Here is a 440-residue protein sequence, read N- to C-terminus: Ultraviolet-B receptor UVR8 (440 aa).

Residue Ala2 is modified to N-acetylalanine. 8 RCC1 repeats span residues 2–31, 32–84, 86–137, 139–189, 190–241, 243–293, 294–345, and 347–399; these read AEDM…VALL, SGDI…AYSQ, GMEV…AVTM, GEVQ…AVTE, DGDL…SVSY, GALY…ALTS, DGKL…AVTE, and NNVF…SGKS. Positions 397–423 are required for interaction with COP1; that stretch reads GKSWVSPAERYAVVPDETGLTDGSSKG. Positions 413–440 are disordered; that stretch reads ETGLTDGSSKGNGGDISVPQTDVKRVRI.

As to quaternary structure, homodimer in the absence of UV-B, but absorption of UV-B induces monomerization of UVR8 and interaction with COP1. Interacts with RUP1, RUP2 and histone H2B.

It is found in the nucleus. It localises to the cytoplasm. The protein resides in the cytosol. UV-B specific signaling component that acts as a UV-B photoreceptor and plays a key role in establishing UV-protective responses in plants. Upon UV-B irradiation, UVR8 undergoes an immediate switch from homodimer to monomer, accumulates in the nucleus, interacts with the photomorphogenic repressor COP1 and regulates the expression of the transcription factor HY5 by associating with chromatin (through histone H2B binding) in the HY5 promoter region. UVR8 is involved in controlling aspects of leaf growth and morphogenesis in response to UV-B, is required for normal progression of endocycle and has a regulatory role in stomatal differentiation. Is required for plant circadian clock response to photomorphogenic UV-B light, partly through the transcriptional activation of responsive clock genes. Promotes photosynthetic efficiency at elevated levels of UV-B. Plays a role in mediating the effects of UV-B radiation on pathogen resistance by controlling the expression of the sinapate biosynthetic pathway. The two tryptophans, Trp-285 and Trp-233, serve collectively as the UV-B chromophore. This is Ultraviolet-B receptor UVR8 from Arabidopsis thaliana (Mouse-ear cress).